An 824-amino-acid chain; its full sequence is Glycerol-3-phosphate acyltransferase (824 aa).

The HXXXXD motif signature appears at 302-307 (CHRSHM).

The protein belongs to the GPAT/DAPAT family.

The protein resides in the cell inner membrane. The catalysed reaction is sn-glycerol 3-phosphate + an acyl-CoA = a 1-acyl-sn-glycero-3-phosphate + CoA. Its pathway is phospholipid metabolism; CDP-diacylglycerol biosynthesis; CDP-diacylglycerol from sn-glycerol 3-phosphate: step 1/3. The sequence is that of Glycerol-3-phosphate acyltransferase from Actinobacillus pleuropneumoniae serotype 3 (strain JL03).